The chain runs to 274 residues: Penicillin-insensitive murein endopeptidase (274 aa).

Positions 1–19 are cleaved as a signal peptide; that stretch reads MNKTAIALLALLASSASLA. 3 disulfide bridges follow: cysteine 44-cysteine 265, cysteine 187-cysteine 235, and cysteine 216-cysteine 223. Residues histidine 110, histidine 113, aspartate 120, aspartate 147, histidine 150, and histidine 211 each contribute to the Zn(2+) site. Positions 227 to 274 are disordered; it reads PLPPPGDGCGAELQSWFEPPKPGTTKPEKKTPPPLPPSCQALLDEHVI.

The protein belongs to the peptidase M74 family. In terms of assembly, dimer. Zn(2+) serves as cofactor.

Its subcellular location is the periplasm. Functionally, murein endopeptidase that cleaves the D-alanyl-meso-2,6-diamino-pimelyl amide bond that connects peptidoglycan strands. Likely plays a role in the removal of murein from the sacculus. The chain is Penicillin-insensitive murein endopeptidase from Escherichia coli O9:H4 (strain HS).